The sequence spans 207 residues: NADH-ubiquinone oxidoreductase chain 6 (207 aa).

A run of 5 helical transmembrane segments spans residues Ile-15–Ser-35, Ser-40–Ile-60, Leu-66–Phe-86, Leu-116–Tyr-136, and Ile-184–Thr-204.

The protein belongs to the complex I subunit 6 family.

It is found in the mitochondrion membrane. It carries out the reaction a ubiquinone + NADH + 5 H(+)(in) = a ubiquinol + NAD(+) + 4 H(+)(out). Its function is as follows. Core subunit of the mitochondrial membrane respiratory chain NADH dehydrogenase (Complex I) that is believed to belong to the minimal assembly required for catalysis. Complex I functions in the transfer of electrons from NADH to the respiratory chain. The immediate electron acceptor for the enzyme is believed to be ubiquinone. This is NADH-ubiquinone oxidoreductase chain 6 (ND6) from Wickerhamomyces canadensis (Yeast).